The chain runs to 156 residues: Small ribosomal subunit protein uS7 (156 aa).

The protein belongs to the universal ribosomal protein uS7 family. As to quaternary structure, part of the 30S ribosomal subunit. Contacts proteins S9 and S11.

In terms of biological role, one of the primary rRNA binding proteins, it binds directly to 16S rRNA where it nucleates assembly of the head domain of the 30S subunit. Is located at the subunit interface close to the decoding center, probably blocks exit of the E-site tRNA. This chain is Small ribosomal subunit protein uS7, found in Metamycoplasma arthritidis (strain 158L3-1) (Mycoplasma arthritidis).